Consider the following 133-residue polypeptide: Beta-synuclein (133 aa).

Repeat copies occupy residues 20–30 (EKTKQGVTEAA) and 31–41 (EKTKEGVLYVG). The tract at residues 20-66 (EKTKQGVTEAAEKTKEGVLYVGSKTSGVVQGVASVAEKTKEQASHLG) is 4 X 11 AA tandem repeats of [EGS]-K-T-K-[EQ]-[GQ]-V-X(4). The stretch at 42 to 55 (SKTSGVVQGVASVA) is one 3; approximate repeat. Ser-45 carries the post-translational modification Phosphoserine. Repeat unit 4 spans residues 56-66 (EKTKEQASHLG). The segment at 96-133 (EVAQEAAEEPLIEPLMEPEGESYEDSPQEEYQEYEPEA) is disordered. Over residues 97–133 (VAQEAAEEPLIEPLMEPEGESYEDSPQEEYQEYEPEA) the composition is skewed to acidic residues. Position 117 is a phosphoserine; by BARK1, CK2 and GRK5 (Ser-117).

This sequence belongs to the synuclein family. In terms of processing, phosphorylated. Phosphorylation by G-protein coupled receptor kinases (GRK) is more efficient than phosphorylation by CK1, CK2 and CaM-kinase II. As to expression, highly expressed in the brain.

The protein resides in the cytoplasm. In terms of biological role, may be involved in neuronal plasticity. The polypeptide is Beta-synuclein (Sncb) (Mus musculus (Mouse)).